The sequence spans 330 residues: PDZ and LIM domain protein 4 (330 aa).

In terms of domain architecture, PDZ spans 1–84 (MPHSVTLRGP…HLTLSVSRPE (84 aa)). Positions 104-180 (IDPEIQDGSP…DPARGLPRSR (77 aa)) are disordered. Over residues 111-121 (GSPTTSRRPSG) the composition is skewed to low complexity. 4 positions are modified to phosphoserine: Ser-112, Ser-116, Ser-120, and Ser-135. A compositionally biased stretch (polar residues) spans 148-163 (NGSSEATLPAQMSTLH). In terms of domain architecture, LIM zinc-binding spans 253–312 (PECTRCGHGIVGTIVKARDKLYHPECFMCSDCGLNLKQRGYFFLDERLYCESHAKARVKP).

In terms of assembly, homodimer. Interacts with PTPN13. Interacts (via C-terminus only or via combined C-terminus and LIM domain, but not LIM domain only) with PTPN13 (via the second or fourth PDZ domains). Found in a complex with PTPN13 and TRIP6. Interacts (via PDZ domain) with ACTN1 and ACTN2 (via C-terminal SDL residues). Interacts (via PDZ domain) with TRIP6 (via the second LIM domain or via the third LIM domain plus C-terminus). Interacts (via LIM domain) with GRIA1 (via C-terminus); this interaction as well as the interaction with alpha-actinin is required for their colocalization in early endosomes. Interacts with PDLIM1. Forms (via LIM domain) a heterodimer with PDLIM3. Interacts directly with SRC (via kinase domain and to a lesser extent the SH2 domain). Isoform 2 interacts with NQO1. NQO1-stabilized isoform 2 heterodimerizes with isoform 1. Phosphorylated on tyrosine residue(s). Can be dephosphorylated by PTPN13. As to expression, found in brain.

It localises to the cytoplasm. The protein localises to the cytoskeleton. Its subcellular location is the nucleus. The protein resides in the perinuclear region. It is found in the cell projection. It localises to the lamellipodium. The protein localises to the dendritic spine. Its subcellular location is the early endosome membrane. The protein resides in the recycling endosome membrane. It is found in the synapse. It localises to the synaptosome. Functionally, suppresses SRC activation by recognizing and binding to active SRC and facilitating PTPN13-mediated dephosphorylation of SRC 'Tyr-419' leading to its inactivation. Inactivated SRC dissociates from this protein allowing the initiation of a new SRC inactivation cycle. Involved in reorganization of the actin cytoskeleton. In nonmuscle cells, binds to ACTN1 (alpha-actinin-1), increases the affinity of ACTN1 to F-actin (filamentous actin), and promotes formation of actin stress fibers. Involved in regulation of the synaptic AMPA receptor transport in dendritic spines of hippocampal pyramidal neurons directing the receptors toward an insertion at the postsynaptic membrane. Links endosomal surface-internalized GRIA1-containing AMPA receptors to the alpha-actinin/actin cytoskeleton. Increases AMPA receptor-mediated excitatory postsynaptic currents in neurons. Involved in reorganization of the actin cytoskeleton and in regulation of cell migration. In response to oxidative stress, binds to NQO1, which stabilizes it and protects it from ubiquitin-independent degradation by the core 20S proteasome. Stabilized protein is able to heterodimerize with isoform 1 changing the subcellular location of it from cytoskeleton and nuclei to cytosol, leading to loss of isoforms 1 ability to induce formation of actin stress fibers. Counteracts the effects produced by isoform 1 on organization of actin cytoskeleton and cell motility to fine-tune actin cytoskeleton rearrangement and to attenuate cell migration. The sequence is that of PDZ and LIM domain protein 4 (PDLIM4) from Homo sapiens (Human).